A 291-amino-acid chain; its full sequence is 33 kDa chaperonin (291 aa).

2 cysteine pairs are disulfide-bonded: cysteine 235-cysteine 237 and cysteine 268-cysteine 271.

It belongs to the HSP33 family. In terms of processing, under oxidizing conditions two disulfide bonds are formed involving the reactive cysteines. Under reducing conditions zinc is bound to the reactive cysteines and the protein is inactive.

It is found in the cytoplasm. Functionally, redox regulated molecular chaperone. Protects both thermally unfolding and oxidatively damaged proteins from irreversible aggregation. Plays an important role in the bacterial defense system toward oxidative stress. The protein is 33 kDa chaperonin of Bacillus subtilis (strain 168).